The chain runs to 563 residues: Arginine--tRNA ligase (563 aa).

A 'HIGH' region motif is present at residues 121-131; that stretch reads PNIAKPFSIGH.

Belongs to the class-I aminoacyl-tRNA synthetase family. Monomer.

The protein localises to the cytoplasm. It carries out the reaction tRNA(Arg) + L-arginine + ATP = L-arginyl-tRNA(Arg) + AMP + diphosphate. The polypeptide is Arginine--tRNA ligase (Streptococcus pneumoniae (strain Hungary19A-6)).